Reading from the N-terminus, the 110-residue chain is DNA-directed RNA polymerase subunit omega (110 aa).

Belongs to the RNA polymerase subunit omega family. The RNAP catalytic core consists of 2 alpha, 1 beta, 1 beta' and 1 omega subunit. When a sigma factor is associated with the core the holoenzyme is formed, which can initiate transcription.

It carries out the reaction RNA(n) + a ribonucleoside 5'-triphosphate = RNA(n+1) + diphosphate. Functionally, promotes RNA polymerase assembly. Latches the N- and C-terminal regions of the beta' subunit thereby facilitating its interaction with the beta and alpha subunits. The chain is DNA-directed RNA polymerase subunit omega from Mycobacterium leprae (strain Br4923).